The chain runs to 191 residues: UPF0312 protein Shew185_3055 (191 aa).

Positions 1 to 22 (MKKQLLSALIGASLLAPMAASA) are cleaved as a signal peptide.

Belongs to the UPF0312 family. Type 1 subfamily.

It localises to the periplasm. The sequence is that of UPF0312 protein Shew185_3055 from Shewanella baltica (strain OS185).